The primary structure comprises 189 residues: Cold-regulated 413 plasma membrane protein 3 (189 aa).

At 1 to 24 the chain is on the extracellular side; that stretch reads MENIEYLNEIQAVAGKLIHSYGVP. A helical membrane pass occupies residues 25–45; the sequence is VMITLFLRWLASIVAVFLMIL. Over 46–55 the chain is Cytoplasmic; that stretch reads DQTKWKYSNN. A helical membrane pass occupies residues 56 to 76; sequence IMASLLAPYLFSSLPIVIFQV. Topologically, residues 77-79 are extracellular; sequence LRN. A helical transmembrane segment spans residues 80 to 100; sequence GVGKWIALLTVILRLFLPNHF. The Cytoplasmic portion of the chain corresponds to 101-104; the sequence is HESL. A helical membrane pass occupies residues 105 to 125; that stretch reads EIPGATILLIVVTPSDIGAIF. Topologically, residues 126-168 are extracellular; that stretch reads RDDLRYTGGDVCLLTSFYLINKHTKACGGIKNSFTQKDKVTYS. Residues 169–189 form a helical membrane-spanning segment; it reads ICLWILFVYPILSSFAALFYL.

This sequence belongs to the Cold-regulated 413 protein family.

It is found in the cell membrane. This chain is Cold-regulated 413 plasma membrane protein 3, found in Arabidopsis thaliana (Mouse-ear cress).